The following is a 197-amino-acid chain: Large ribosomal subunit protein bL25 (197 aa).

The protein belongs to the bacterial ribosomal protein bL25 family. CTC subfamily. As to quaternary structure, part of the 50S ribosomal subunit; part of the 5S rRNA/L5/L18/L25 subcomplex. Contacts the 5S rRNA. Binds to the 5S rRNA independently of L5 and L18.

Its function is as follows. This is one of the proteins that binds to the 5S RNA in the ribosome where it forms part of the central protuberance. In Hydrogenobaculum sp. (strain Y04AAS1), this protein is Large ribosomal subunit protein bL25.